Here is a 1033-residue protein sequence, read N- to C-terminus: MARASCAWHSLWLLQWTPLFLGPSAVPPVWALNLDSEKFSVYAGPNGSHFGFSVDFHKDKHGSVSIVVGAPRALNASQEETGAVFLCPWKANGGKCNPLLFDLRDETRNLGFQIFQTFKTGQGLGASVVSWNDVIVACAPWQHWNVLEKRDEAEKTPVGGCFLAQLQSGGRAEYSPCRANTMSSVYAESFRGDKRYCEAGFSLAVTQAGELVLGAPGGYFFLGLLARVPIENIISSYRPGTLLWHVSNQRFTYDNSNPVFFDGYRGYSVAVGEFDGDPSTTEYVSGAPTWSWTLGAVEILDSYYQPLHRLHGEQMASYFGHSVAVTDVNGDGRHDLLVGAPLYMESRADRKLAEVGRVYLFLQPKGPQALSTPTLLLTGTQLYGRFGSAIAPLGDLNRDGYNDIAVAAPYGGPSGQGQVLIFLGQSEGLSPRPSQVLDSPFPTGSGFGFSLRGAVDIDDNGYPDLIVGAYGASKVAVYRAQPVVMATVQLMVQDSLNPTLKNCVLDQTKTPVSCFNIQMCVGATGHNIPQKLHLKAELQLDLQKPRQGRRVLLLASQQASLTLSLDLGGRDKPICHTTGAFLRDEADFRDKLSPIVLSLNVSLPPEETGGAPAVVLHGETHVQEQTRIILDCGEDDLCVPQLRLTATAGDSPLLIGADNVLELKIEAANDGEGAYEAELAVHLPPGAHYMRALSNIEGFERLVCTQKKENESRVALCELGNPMKKDTRIGITMLVSVENLEEAGESVSFQLQVRSKNSQNPNSKVVMLPVAIQAEATVELRGNSFPASLVVAAEEGDREQEDLDRWVSRLEHTYELHNIGPGTVNGLRLLIHIPGQSQPSDLLYILDVQPQGGLLCSTQPSPKVDWKLSTPSPSSIRPVHHQRERRQAFLQGPKPGQQDPVLVSCDGSASCTVVECELREMVRGQRAMVTVQVMLGLSSLRQRPQEQFVLQSHAWFNVSSLPYSVPVVSLPSGQARVQTQLLRALEERAIPVWWVLVGVLGGLLLLTLLVLAMWKAGFFKRNRPPLEEDEEEE.

The first 31 residues, 1 to 31 (MARASCAWHSLWLLQWTPLFLGPSAVPPVWA), serve as a signal peptide directing secretion. Residues 32 to 988 (LNLDSEKFSV…TQLLRALEER (957 aa)) are Extracellular-facing. FG-GAP repeat units lie at residues 35–96 (DSEK…GGKC), 109–173 (NLGF…GRAE), 184–237 (SVYA…ISSY), 252–304 (TYDN…DSYY), 305–370 (QPLH…PQAL), 372–431 (TPTL…GLSP), and 434–495 (SQVL…VQDS). Asn46 and Asn75 each carry an N-linked (GlcNAc...) asparagine glycan. Disulfide bonds link Cys87–Cys96, Cys138–Cys161, and Cys177–Cys197. Ca(2+) contacts are provided by Glu273, Asp275, Asp277, Thr280, Glu282, Asp327, Asn329, Asp331, Arg333, Asp335, Asp395, Asp399, Tyr401, Asp403, Asp456, Asp458, Asn460, Tyr462, and Asp464. 2 disulfide bridges follow: Cys503-Cys514 and Cys520-Cys575. A glycan (N-linked (GlcNAc...) asparagine) is linked at Asn600. 4 cysteine pairs are disulfide-bonded: Cys632–Cys638, Cys704–Cys717, Cys856–Cys916, and Cys905–Cys911. Asn710 carries an N-linked (GlcNAc...) asparagine glycan. N-linked (GlcNAc...) asparagine glycosylation occurs at Asn957. A helical membrane pass occupies residues 989 to 1014 (AIPVWWVLVGVLGGLLLLTLLVLAMW). Topologically, residues 1015–1033 (KAGFFKRNRPPLEEDEEEE) are cytoplasmic. Residues 1017–1021 (GFFKR) carry the GFFKR motif motif.

This sequence belongs to the integrin alpha chain family. In terms of assembly, heterodimer of an alpha and a beta subunit. The alpha subunit is composed of a heavy and a light chain linked by a disulfide bond. Alpha-IIb associates with beta-3. Directly interacts with RNF181. Interacts (via C-terminus cytoplasmic tail region) with CIB1; the interaction is direct and calcium-dependent. Interacts (via C-terminus cytoplasmic tail region) with CIB2, CIB3 and CIB4; the interactions are stabilized/increased in a calcium and magnesium-dependent manner. ITGA2B:ITGB3 interacts with PPIA/CYPA; the interaction is ROS and PPIase activity-dependent and is increased in the presence of thrombin. ITGA2B:ITGB3 interacts with SELP (via C-type lectin domain); the interaction mediates cell-cell interaction and adhesion. Cleaved by ELANE; the cleavage promotes activation of platelet fibrinogen receptor integrin alpha-IIb/beta-3.

It is found in the membrane. In terms of biological role, integrin alpha-IIb/beta-3 is a receptor for fibronectin, fibrinogen, plasminogen, prothrombin, thrombospondin and vitronectin. It recognizes the sequence R-G-D in a wide array of ligands. It recognizes the sequence H-H-L-G-G-G-A-K-Q-A-G-D-V in fibrinogen gamma chain. Following activation integrin alpha-IIb/beta-3 brings about platelet/platelet interaction through binding of soluble fibrinogen. This step leads to rapid platelet aggregation which physically plugs ruptured endothelial cell surface. In Mus musculus (Mouse), this protein is Integrin alpha-IIb (Itga2b).